A 254-amino-acid polypeptide reads, in one-letter code: uncharacterized protein (254 aa).

It belongs to the MtxX family.

This is an uncharacterized protein from Methanopyrus kandleri (strain AV19 / DSM 6324 / JCM 9639 / NBRC 100938).